Reading from the N-terminus, the 576-residue chain is Adenine deaminase (576 aa).

The protein belongs to the metallo-dependent hydrolases superfamily. Adenine deaminase family. Mn(2+) serves as cofactor.

The enzyme catalyses adenine + H2O + H(+) = hypoxanthine + NH4(+). This is Adenine deaminase from Bacillus pumilus (strain SAFR-032).